The sequence spans 295 residues: Pantothenate synthetase (295 aa).

Residue histidine 37 is the Proton donor of the active site. Glutamine 61 is a binding site for (R)-pantoate. Glutamine 61 serves as a coordination point for beta-alanine. 154–157 (GRKD) provides a ligand contact to ATP. Glutamine 160 contributes to the (R)-pantoate binding site. ATP is bound by residues valine 183 and 191–194 (QSSR).

This sequence belongs to the pantothenate synthetase family. Homodimer.

The protein localises to the cytoplasm. It carries out the reaction (R)-pantoate + beta-alanine + ATP = (R)-pantothenate + AMP + diphosphate + H(+). It participates in cofactor biosynthesis; (R)-pantothenate biosynthesis; (R)-pantothenate from (R)-pantoate and beta-alanine: step 1/1. Catalyzes the condensation of pantoate with beta-alanine in an ATP-dependent reaction via a pantoyl-adenylate intermediate. This Salinibacter ruber (strain DSM 13855 / M31) protein is Pantothenate synthetase.